We begin with the raw amino-acid sequence, 193 residues long: Acyl carrier protein phosphodiesterase (193 aa).

This sequence belongs to the AcpH family.

It catalyses the reaction holo-[ACP] + H2O = apo-[ACP] + (R)-4'-phosphopantetheine + H(+). Functionally, converts holo-ACP to apo-ACP by hydrolytic cleavage of the phosphopantetheine prosthetic group from ACP. The chain is Acyl carrier protein phosphodiesterase from Salmonella paratyphi A (strain ATCC 9150 / SARB42).